A 370-amino-acid polypeptide reads, in one-letter code: Ornithine carbamoyltransferase, mitochondrial (370 aa).

The N-terminal 38 residues, 1 to 38, are a transit peptide targeting the mitochondrion; sequence MPSPLRTAPQPPLRAFHNPPALRRLYSSTSHSAATPAT. Carbamoyl phosphate is bound by residues 97–100, Arg-148, His-175, and Gln-178; that span reads STRT. L-ornithine-binding residues include Asn-216, Asp-282, Ser-286, and Met-287. Cys-324 functions as the Proton acceptor in the catalytic mechanism. Residues 324–325 and Arg-351 each bind carbamoyl phosphate; that span reads CL.

This sequence belongs to the aspartate/ornithine carbamoyltransferase superfamily. OTCase family. Homotrimer.

It localises to the mitochondrion matrix. The enzyme catalyses carbamoyl phosphate + L-ornithine = L-citrulline + phosphate + H(+). Its pathway is amino-acid biosynthesis; L-arginine biosynthesis; L-arginine from L-ornithine and carbamoyl phosphate: step 1/3. The chain is Ornithine carbamoyltransferase, mitochondrial (argB) from Aspergillus niger.